The primary structure comprises 591 residues: DEAD-box ATP-dependent RNA helicase 35 (591 aa).

Residues 146–174 (KNFKDMKFPRPVLDTLKEKGIVQPTPIQV) carry the Q motif motif. The Helicase ATP-binding domain occupies 177 to 361 (LPVILAGRDM…RSALVKPVTV (185 aa)). 190–197 (AFTGSGKT) contributes to the ATP binding site. A DEAD box motif is present at residues 309 to 312 (DEAD). One can recognise a Helicase C-terminal domain in the interval 372–532 (DVIQEVEYVK…RIPPVLAELN (161 aa)). The CCHC-type zinc-finger motif lies at 548 to 565 (KGCAYCGGLGHRIRDCPK).

The protein belongs to the DEAD box helicase family. DDX41 subfamily.

The enzyme catalyses ATP + H2O = ADP + phosphate + H(+). In Arabidopsis thaliana (Mouse-ear cress), this protein is DEAD-box ATP-dependent RNA helicase 35 (RH35).